The sequence spans 203 residues: Putative 3-methyladenine DNA glycosylase (203 aa).

Belongs to the DNA glycosylase MPG family.

The sequence is that of Putative 3-methyladenine DNA glycosylase from Clostridium botulinum (strain Langeland / NCTC 10281 / Type F).